Reading from the N-terminus, the 193-residue chain is uncharacterized protein (193 aa).

This is an uncharacterized protein from Archaeoglobus fulgidus (strain ATCC 49558 / DSM 4304 / JCM 9628 / NBRC 100126 / VC-16).